The following is a 133-amino-acid chain: Holo-[acyl-carrier-protein] synthase (133 aa).

Mg(2+) is bound by residues Asp-8 and Glu-57.

It belongs to the P-Pant transferase superfamily. AcpS family. Mg(2+) serves as cofactor.

It is found in the cytoplasm. It carries out the reaction apo-[ACP] + CoA = holo-[ACP] + adenosine 3',5'-bisphosphate + H(+). Functionally, transfers the 4'-phosphopantetheine moiety from coenzyme A to a Ser of acyl-carrier-protein. This Caulobacter sp. (strain K31) protein is Holo-[acyl-carrier-protein] synthase.